A 580-amino-acid polypeptide reads, in one-letter code: DNA mismatch repair protein MutL (580 aa).

It belongs to the DNA mismatch repair MutL/HexB family.

This protein is involved in the repair of mismatches in DNA. It is required for dam-dependent methyl-directed DNA mismatch repair. May act as a 'molecular matchmaker', a protein that promotes the formation of a stable complex between two or more DNA-binding proteins in an ATP-dependent manner without itself being part of a final effector complex. This Chlamydia felis (strain Fe/C-56) (Chlamydophila felis) protein is DNA mismatch repair protein MutL.